Here is a 160-residue protein sequence, read N- to C-terminus: Non-secretory ribonuclease (160 aa).

The first 27 residues, 1–27 (MVPKLFTSQICLLLLLGLMGVEGSLHA), serve as a signal peptide directing secretion. C-linked (Man) tryptophan glycosylation is present at Trp34. The active-site Proton acceptor is the His42. Asn44 carries N-linked (GlcNAc...) asparagine glycosylation. 4 disulfides stabilise this stretch: Cys50/Cys110, Cys64/Cys122, Cys82/Cys137, and Cys89/Cys98. At Tyr60 the chain carries 3'-nitrotyrosine. A substrate-binding site is contributed by 65–69 (KNQNT). N-linked (GlcNAc...) asparagine glycosylation is found at Asn92, Asn111, and Asn138. The active-site Proton donor is the His155.

This sequence belongs to the pancreatic ribonuclease family. Interacts with and forms a tight 1:1 complex with RNH1. Dimerization of two such complexes may occur.

The protein localises to the lysosome. It localises to the cytoplasmic granule. The enzyme catalyses an [RNA] containing cytidine + H2O = an [RNA]-3'-cytidine-3'-phosphate + a 5'-hydroxy-ribonucleotide-3'-[RNA].. It catalyses the reaction an [RNA] containing uridine + H2O = an [RNA]-3'-uridine-3'-phosphate + a 5'-hydroxy-ribonucleotide-3'-[RNA].. This is a non-secretory ribonuclease. It is a pyrimidine specific nuclease with a slight preference for U. Cytotoxin and helminthotoxin. Possesses a wide variety of biological activities. This is Non-secretory ribonuclease (RNASE2) from Macaca fascicularis (Crab-eating macaque).